The chain runs to 474 residues: Iroquois-class homeodomain protein irx-5 (474 aa).

A DNA-binding region (homeobox; TALE-type) is located at residues 109–171; that stretch reads DPAYRKNASR…NARRRLKKEN (63 aa). Disordered regions lie at residues 174–222, 252–294, and 453–474; these read TWTP…SPDG, ERNG…IQQL, and SQSQ…MSSI. Residues 182 to 199 show a composition bias toward acidic residues; that stretch reads EDEDDDENIDLEKNEEDD. The segment covering 263-273 has biased composition (pro residues); it reads PPTPPLCPPDQ.

This sequence belongs to the TALE/IRO homeobox family. Early in gastrulation, expressed in cells beneath the blastopore lip. Subsequently expressed in the neural plate in overlapping patterns with other irx members, which all share an anterior border of expression. At the time of neural tube closure (stage 19) in regions of the midbrain, hindbrain, neural tube and optic vesicle, where expression continues during tailbud stages. In stage 34, expressed throughout the eye retina. Does not appear to be expressed in the developing heart or pronephros.

Its subcellular location is the nucleus. In terms of biological role, acts partially redundantly with other irx members in neural patterning. Required for formation of the posterior forebrain, midbrain, hindbrain, and to a lesser extent, spinal cord. Patterns the neuroectoderm in both the anterior/posterior and dorsal/ventral axes. Does not appear to play a role in pronephros kidney development. Involved in craniofacial and gonadal development. Modulates the migration of progenitor cell populations in branchial arches and gonads by repressing CXCL12. The protein is Iroquois-class homeodomain protein irx-5 (irx5) of Xenopus laevis (African clawed frog).